The following is a 1569-amino-acid chain: Zinc finger protein GLI3 (1569 aa).

Polar residues-rich tracts occupy residues 1–10 (MEAQSRSTTA) and 416–432 (AAQQNKPTSESAVSSTG). 2 disordered regions span residues 1-79 (MEAQ…STSS) and 414-461 (SEAA…DQPD). C2H2-type zinc fingers lie at residues 485-510 (TNCHWEGCSREFDTQEQLVHHINNDH), 518-545 (FVCRWLDCSREQKPFKAQYMLVVHMRRH), 551-575 (HKCTFEGCSKAYSRLENLKTHLRSH), 581-606 (YVCEHEGCNKAFSNASDRAKHQNRTH), and 612-637 (YVCKIPGCTKRYTDPSSLRKHVKTVH). Disordered stretches follow at residues 625–731 (DPSS…YTNS), 899–921 (SYDPISTDASRRSSETSQCDGLP), 1202–1228 (PKSGLSQQRGYQHHTQNNPQAPQQNLD), and 1335–1364 (SNQTTSGQNGNTTDGTRSFLSTTQNGGEQQ). A compositionally biased stretch (basic and acidic residues) spans 637 to 653 (HGPEAHVTKKQRGDIHP). The segment covering 663–676 (SHSQSRSPGQQTQG) has biased composition (polar residues). The span at 678–704 (HGEHKDLSNTTSKHEECLQVRSVKTEK) shows a compositional bias: basic and acidic residues. Over residues 705 to 731 (PMSSQPSPGGKSSCSRQQSPISNYTNS) the composition is skewed to polar residues. A compositionally biased stretch (low complexity) spans 1335–1350 (SNQTTSGQNGNTTDGT). Over residues 1352-1364 (SFLSTTQNGGEQQ) the composition is skewed to polar residues.

It belongs to the GLI C2H2-type zinc-finger protein family. Post-translationally, phosphorylation is essential for its proteolytic processing. In terms of processing, the repressor form (GLI3R), a C-terminally truncated form is generated from the full-length GLI3 protein (GLI3FL) through proteolytic processing.

It localises to the nucleus. The protein localises to the cytoplasm. Functionally, has a dual function as a transcriptional activator and a repressor of the sonic hedgehog (Shh) pathway, and may play a role in limb development. May bind to the minimal GLI-consensus sequence 5'-GGGTGGTC-3'. Has an essential role in the early embryonic patterning of mesoderm and neuroectoderm. In Xenopus laevis (African clawed frog), this protein is Zinc finger protein GLI3 (gli3).